The following is a 46-amino-acid chain: CAKHSETCKNGNCCTCTQYRGKDEPMACRRGTHGQRCQCVMKIMKH.

In terms of processing, contains 4 disulfide bonds. As to expression, expressed by the venom gland.

The protein localises to the secreted. Potent toxin that may paralyze and/or kill insect pests such as H.virescens (lepidoptera), S.exigua (beet armyworm) and M.sexta (tobacco hornworm). This chain is U2-plectoxin-Pt1a, found in Plectreurys tristis (Spider).